Here is a 295-residue protein sequence, read N- to C-terminus: tRNA pseudouridine synthase B (295 aa).

Catalysis depends on Asp-42, which acts as the Nucleophile.

It belongs to the pseudouridine synthase TruB family. Type 1 subfamily.

It catalyses the reaction uridine(55) in tRNA = pseudouridine(55) in tRNA. Its function is as follows. Responsible for synthesis of pseudouridine from uracil-55 in the psi GC loop of transfer RNAs. The polypeptide is tRNA pseudouridine synthase B (Cutibacterium acnes (strain DSM 16379 / KPA171202) (Propionibacterium acnes)).